The chain runs to 811 residues: tRNA(Met) cytidine acetyltransferase TmcA (811 aa).

ATP-binding residues include Gln267 and Arg440. In terms of domain architecture, N-acetyltransferase spans 474–663 (RKEVYLEEPD…GEFTAIVLKP (190 aa)). Residues 590-592 (IAT), Glu630, and Arg637 each bind acetyl-CoA.

It belongs to the TmcA family.

It is found in the cytoplasm. The catalysed reaction is cytidine(34) in elongator tRNA(Met) + acetyl-CoA + ATP + H2O = N(4)-acetylcytidine(34) in elongator tRNA(Met) + ADP + phosphate + CoA + H(+). It carries out the reaction a cytidine in RNA + acetyl-CoA + ATP + H2O = an N(4)-acetylcytidine in RNA + ADP + phosphate + CoA + H(+). The enzyme catalyses a cytidine in tRNA + acetyl-CoA + ATP + H2O = an N(4)-acetylcytidine in tRNA + ADP + phosphate + CoA + H(+). It catalyses the reaction a cytidine in mRNA + acetyl-CoA + ATP + H2O = an N(4)-acetylcytidine in mRNA + ADP + phosphate + CoA + H(+). Functionally, catalyzes the formation of N(4)-acetylcytidine (ac(4)C) at the wobble position of tRNA(Met), by using acetyl-CoA as an acetyl donor and ATP (or GTP). Catalyzes the formation of 404 N(4)-acetylcytidine (ac(4)C) sites in RNA, almost always on the middle C of a CCG motif. There 173 ac(4)C sites in rRNA, 35 in non-coding (nc)RNA, 119 in mRNA and 77 in tRNA. More acetylation is observed at 85 and 95 than at 65 or 75 degrees Celsius. This chain is tRNA(Met) cytidine acetyltransferase TmcA, found in Thermococcus kodakarensis (strain ATCC BAA-918 / JCM 12380 / KOD1) (Pyrococcus kodakaraensis (strain KOD1)).